Here is a 158-residue protein sequence, read N- to C-terminus: Phosphopantetheine adenylyltransferase (158 aa).

Position 10 (threonine 10) interacts with substrate. Residues 10 to 11 (TF) and histidine 18 contribute to the ATP site. Lysine 42, leucine 74, and arginine 88 together coordinate substrate. ATP-binding positions include 89-91 (GIR), glutamate 99, and 124-130 (WRYLSST).

Belongs to the bacterial CoaD family. As to quaternary structure, homohexamer. Mg(2+) serves as cofactor.

The protein resides in the cytoplasm. The catalysed reaction is (R)-4'-phosphopantetheine + ATP + H(+) = 3'-dephospho-CoA + diphosphate. Its pathway is cofactor biosynthesis; coenzyme A biosynthesis; CoA from (R)-pantothenate: step 4/5. Reversibly transfers an adenylyl group from ATP to 4'-phosphopantetheine, yielding dephospho-CoA (dPCoA) and pyrophosphate. In Actinobacillus pleuropneumoniae serotype 5b (strain L20), this protein is Phosphopantetheine adenylyltransferase.